Consider the following 247-residue polypeptide: 3-deoxy-manno-octulosonate cytidylyltransferase (247 aa).

Belongs to the KdsB family.

The protein resides in the cytoplasm. The catalysed reaction is 3-deoxy-alpha-D-manno-oct-2-ulosonate + CTP = CMP-3-deoxy-beta-D-manno-octulosonate + diphosphate. The protein operates within nucleotide-sugar biosynthesis; CMP-3-deoxy-D-manno-octulosonate biosynthesis; CMP-3-deoxy-D-manno-octulosonate from 3-deoxy-D-manno-octulosonate and CTP: step 1/1. It participates in bacterial outer membrane biogenesis; lipopolysaccharide biosynthesis. Activates KDO (a required 8-carbon sugar) for incorporation into bacterial lipopolysaccharide in Gram-negative bacteria. In Methylobacterium nodulans (strain LMG 21967 / CNCM I-2342 / ORS 2060), this protein is 3-deoxy-manno-octulosonate cytidylyltransferase.